The chain runs to 189 residues: GTP cyclohydrolase 1 (189 aa).

Positions 76, 79, and 149 each coordinate Zn(2+).

Belongs to the GTP cyclohydrolase I family. In terms of assembly, toroid-shaped homodecamer, composed of two pentamers of five dimers.

The enzyme catalyses GTP + H2O = 7,8-dihydroneopterin 3'-triphosphate + formate + H(+). It functions in the pathway cofactor biosynthesis; 7,8-dihydroneopterin triphosphate biosynthesis; 7,8-dihydroneopterin triphosphate from GTP: step 1/1. This chain is GTP cyclohydrolase 1, found in Dehalococcoides mccartyi (strain ATCC BAA-2266 / KCTC 15142 / 195) (Dehalococcoides ethenogenes (strain 195)).